The following is a 400-amino-acid chain: Endoglucanase 5A (400 aa).

An N-terminal signal peptide occupies residues 1–26; it reads MKKITTIFVVLLMTVALFSIGNTTAA. Substrate-binding positions include His61, 65–66, Tyr92, and His127; that span reads WY. Glu165 (proton donor) is an active-site residue. Substrate is bound at residue Tyr228. Glu254 serves as the catalytic Nucleophile. Residues 260–261, Trp288, and 293–295 contribute to the substrate site; these read AT and KDE. Residues 328–363 form a disordered region; the sequence is ESASIPPSDPTPPSDPGEPDPTPPSDPGEYPAWDPN. Pro residues predominate over residues 334 to 353; that stretch reads PSDPTPPSDPGEPDPTPPSD. Residues 357 to 396 enclose the Chitin-binding type-3 domain; the sequence is YPAWDPNQIYTNEIVYHNGQLWQAKWWTQNQEPGDPYGPW.

It belongs to the glycosyl hydrolase 5 (cellulase A) family. In terms of assembly, monomer.

The protein resides in the secreted. The enzyme catalyses Endohydrolysis of (1-&gt;4)-beta-D-glucosidic linkages in cellulose, lichenin and cereal beta-D-glucans.. This is Endoglucanase 5A (cel5A) from Salipaludibacillus agaradhaerens (Bacillus agaradhaerens).